Consider the following 291-residue polypeptide: Bis(5'-nucleosyl)-tetraphosphatase, symmetrical (291 aa).

The protein belongs to the Ap4A hydrolase family.

The enzyme catalyses P(1),P(4)-bis(5'-adenosyl) tetraphosphate + H2O = 2 ADP + 2 H(+). Hydrolyzes diadenosine 5',5'''-P1,P4-tetraphosphate to yield ADP. This chain is Bis(5'-nucleosyl)-tetraphosphatase, symmetrical, found in Coxiella burnetii (strain CbuK_Q154) (Coxiella burnetii (strain Q154)).